The chain runs to 359 residues: Epoxide hydrolase 4 (359 aa).

A helical; Signal-anchor for type II membrane protein membrane pass occupies residues 15 to 35; it reads ALLYWSLVYGYCGLCASVHLL. Residues 92–337 form the AB hydrolase-1 domain; that stretch reads PLMLLLHGFP…ILSEGSHWLQ (246 aa). Catalysis depends on Asp-167, which acts as the Nucleophile. The Proton donor role is filled by Tyr-279. The active-site Proton acceptor is His-334.

The protein belongs to the AB hydrolase superfamily. Epoxide hydrolase family.

The protein localises to the membrane. This chain is Epoxide hydrolase 4 (Ephx4), found in Mus musculus (Mouse).